A 174-amino-acid chain; its full sequence is Crossover junction endodeoxyribonuclease RuvC (174 aa).

Residues Asp-8, Glu-68, and Asp-140 contribute to the active site. 3 residues coordinate Mg(2+): Asp-8, Glu-68, and Asp-140.

This sequence belongs to the RuvC family. In terms of assembly, homodimer which binds Holliday junction (HJ) DNA. The HJ becomes 2-fold symmetrical on binding to RuvC with unstacked arms; it has a different conformation from HJ DNA in complex with RuvA. In the full resolvosome a probable DNA-RuvA(4)-RuvB(12)-RuvC(2) complex forms which resolves the HJ. Requires Mg(2+) as cofactor.

The protein resides in the cytoplasm. It catalyses the reaction Endonucleolytic cleavage at a junction such as a reciprocal single-stranded crossover between two homologous DNA duplexes (Holliday junction).. Its function is as follows. The RuvA-RuvB-RuvC complex processes Holliday junction (HJ) DNA during genetic recombination and DNA repair. Endonuclease that resolves HJ intermediates. Cleaves cruciform DNA by making single-stranded nicks across the HJ at symmetrical positions within the homologous arms, yielding a 5'-phosphate and a 3'-hydroxyl group; requires a central core of homology in the junction. The consensus cleavage sequence is 5'-(A/T)TT(C/G)-3'. Cleavage occurs on the 3'-side of the TT dinucleotide at the point of strand exchange. HJ branch migration catalyzed by RuvA-RuvB allows RuvC to scan DNA until it finds its consensus sequence, where it cleaves and resolves the cruciform DNA. This Legionella pneumophila subsp. pneumophila (strain Philadelphia 1 / ATCC 33152 / DSM 7513) protein is Crossover junction endodeoxyribonuclease RuvC.